Here is a 404-residue protein sequence, read N- to C-terminus: Activity-regulated cytoskeleton-associated protein (404 aa).

The stretch at 51–78 forms a coiled coil; it reads EVSKQVERELKGLQKSVGKLENNLEDHV. Residues 351–404 form a disordered region; sequence VQGNMDHSEEPSPQRTPEIQSGDSVESMPPSTTASPVPSNGTQPEPPSPPATVI. A compositionally biased stretch (polar residues) spans 363–393; it reads PQRTPEIQSGDSVESMPPSTTASPVPSNGTQ. Positions 394 to 404 are enriched in pro residues; the sequence is PEPPSPPATVI.

This sequence belongs to the ARC/ARG3.1 family. Homooligomer; homooligomerizes into virion-like capsids. In terms of processing, palmitoylation anchors the protein into the membrane by allowing direct insertion into the hydrophobic core of the lipid bilayer. In terms of tissue distribution, expressed at various levels throughout the brain.

The protein localises to the extracellular vesicle membrane. Its subcellular location is the postsynaptic cell membrane. The protein resides in the synapse. It localises to the postsynaptic density. It is found in the early endosome membrane. The protein localises to the cell projection. Its subcellular location is the dendrite. The protein resides in the cytoplasm. It localises to the cytoskeleton. It is found in the cell cortex. The protein localises to the dendritic spine. In terms of biological role, master regulator of synaptic plasticity that self-assembles into virion-like capsids that encapsulate RNAs and mediate intercellular RNA transfer in the nervous system. ARC protein is released from neurons in extracellular vesicles that mediate the transfer of ARC mRNA into new target cells, where ARC mRNA can undergo activity-dependent translation. ARC capsids are endocytosed and are able to transfer ARC mRNA into the cytoplasm of neurons. Acts as a key regulator of synaptic plasticity: required for protein synthesis-dependent forms of long-term potentiation (LTP) and depression (LTD) and for the formation of long-term memory. Regulates synaptic plasticity by promoting endocytosis of AMPA receptors (AMPARs) in response to synaptic activity: this endocytic pathway maintains levels of surface AMPARs in response to chronic changes in neuronal activity through synaptic scaling, thereby contributing to neuronal homeostasis. Acts as a postsynaptic mediator of activity-dependent synapse elimination in the developing cerebellum by mediating elimination of surplus climbing fiber synapses. Accumulates at weaker synapses, probably to prevent their undesired enhancement. This suggests that ARC-containing virion-like capsids may be required to eliminate synaptic material. The sequence is that of Activity-regulated cytoskeleton-associated protein from Gallus gallus (Chicken).